The chain runs to 816 residues: Coiled-coil and C2 domain-containing protein 1-like (816 aa).

Positions 1–11 are enriched in basic and acidic residues; sequence MFSRKKPEPAK. 3 disordered regions span residues 1–135, 157–176, and 186–269; these read MFSR…TFLP, ANAKTAGDSGKARRFGRGLK, and AAGK…RQTD. Over residues 25–47 the composition is skewed to acidic residues; sequence IPDDFDPSAGYGEDDGGDSDLEA. A compositionally biased stretch (basic and acidic residues) spans 73-85; it reads DLDKMIADSLRDV. Over residues 86 to 100 the composition is skewed to acidic residues; the sequence is SDDDDDDNLESDPDL. A compositionally biased stretch (low complexity) spans 122–131; the sequence is PPAASEEPVQ. A DM14 1 region spans residues 145–200; that stretch reads IKQRLEMYKQAEANAKTAGDSGKARRFGRGLKTLKDLHRQAAAGKSINVDDIPPEV. A compositionally biased stretch (pro residues) spans 220–243; sequence PSTPASPPPVPSRAAPDPPTPGTP. DM14 regions lie at residues 265-317 and 365-419; these read SRQT…MPPP and LQQR…LPVP. A coiled-coil region spans residues 355–382; that stretch reads LAAATNMLEALQQRLEKYQSVEAAAKAE. The segment at 418-492 is disordered; sequence VPPGFGPLPT…TRTSGNQQKN (75 aa). A compositionally biased stretch (low complexity) spans 424–433; that stretch reads PLPTADAAPV. Positions 434–449 are enriched in pro residues; sequence APTPSLPTSPTSPPPT. The span at 450–471 shows a compositional bias: low complexity; that stretch reads ASTSAGGTPSSSSATTPTAPRK. A compositionally biased stretch (polar residues) spans 483 to 492; that stretch reads TRTSGNQQKN. Residues 502-556 form a DM14 4 region; sequence LLERQKEFKLAAIEAKKAGEIDQAKEYLKIFKGFDSLLNAASSGLPVDLSTLPVP. Positions 637 to 776 constitute a C2 domain; it reads RKNEPLPKFH…ETKCEIHDTY (140 aa).

It belongs to the CC2D1 family. As to quaternary structure, interacts (via DM14 domains 1 and 3) with shrb; the interaction is direct and blocks access to the surface involved in shrb polymerization. This interaction may be required for the ESCRT-III complex role in multivesicular body formation.

It localises to the cytoplasm. It is found in the cytosol. The protein localises to the apicolateral cell membrane. Its subcellular location is the cell cortex. The protein resides in the endosome. Phosphatidyl inositol monophosphate binding protein involved in endosomal protein sorting through regulation of the endosomal sorting required for transport (ESCRT) pathway. Required for full activity of the ESCRT-III complex core component shrb/shrub, probably by preventing its inappropriate polymerisation. Required, but not essential, for the efficient generation of intraluminal vesicles (ILVs) in multivesicular bodies (MVBs). Involved in a late stage of the endosomal pathway targeting transmembrane proteins of the plasma membrane for lysosomal degradation. Plays a critical role in regulation of multiple signal transduction pathways, including the Notch and BMP/decapentaplegic (dpp) signaling pathways, through targeting of membrane bound receptors to multivesicular bodies, isolating them from the cytoplasm and targeting them for lysosomal degradation. Involved in targeting N/Notch for endosomal degradation, negatively regulating the Notch signaling pathway. Regulates Notch signaling in imaginal disk cells and follicle cells during oogenesis and multiple developmental processes, including development of wings, veins, legs, eyes and bristles. Restricts the activity of Notch to the dorsoventral (D/V) boundary of the wing imaginal disk. In external sensory organ development regulates Notch signaling during asymmetric cell division and differentiation of sensory organ precursor cells. May be involved in regulation of apoptosis and cell growth independent of Notch signaling. Involved in targeting tkv for endosomal degradation, negatively regulating the BMP/decapentaplegic (dpp) signaling pathway. Regulates the BMP/dpp signaling pathway in follicle cells during oogenesis, but not in imaginal disk cells during wing development. May be involved in differentiation or morphogenesis of peripodial epithelial cells in the developing imaginal disk. Involved in abscission of germline cells during oogenesis. In Drosophila melanogaster (Fruit fly), this protein is Coiled-coil and C2 domain-containing protein 1-like.